The following is a 126-amino-acid chain: uncharacterized protein (126 aa).

2 disordered regions span residues Pro-15 to Gln-72 and Thr-93 to Asn-126. Composition is skewed to basic and acidic residues over residues Asp-29–Glu-46 and Val-55–Gln-64.

This is an uncharacterized protein from Homo sapiens (Human).